A 100-amino-acid polypeptide reads, in one-letter code: Urease subunit gamma (100 aa).

The protein belongs to the urease gamma subunit family. In terms of assembly, heterotrimer of UreA (gamma), UreB (beta) and UreC (alpha) subunits. Three heterotrimers associate to form the active enzyme.

The protein resides in the cytoplasm. It carries out the reaction urea + 2 H2O + H(+) = hydrogencarbonate + 2 NH4(+). Its pathway is nitrogen metabolism; urea degradation; CO(2) and NH(3) from urea (urease route): step 1/1. In Synechococcus sp. (strain CC9605), this protein is Urease subunit gamma.